A 629-amino-acid chain; its full sequence is MAKWNPQKRVLNHEHTRFWRFELRDVDEPNLQKEVFPYDEVSRIDFDHRIIPIQPAEEIFITDTTFRDGQQARPPYTTQQIVDLYQMMSRLGGYNGIIRQTEFFLYSNRDKEAVRMCQDLGLQYPEITGWIRAAREDIPLVKEAGLKETGILTSVSDYHIFLKLNMTRSQALEEYLGIVKAILDAGIVPRCHFEDITRADIYGFCIPFAIELMKLREESGVDIKIRLCDTMGYGVTYPGASLPRGVDKLVRAFIDDADVPGRLLEWHGHNDFHKALINATTAWLYGCSAANSTLLGLGERTGNPPIEGLIIEYIGLMGKTNGIDTTVITDIANYFKNEIEYKIPSNYPFVGADFNVTRAGVHADGLIKSEEIYNIFNTTKILKRPIVPMITDKSGKAGIAYWINSHFGLSGDSTVDKRHPGISKINKWIADEYELGRVTTISTEELEAKVRKYMPELFMSDLERIKFKAAEAAIAVLRKIIDDPAMKTMQPELQEPVMQRFIEEYPSIQFAYVVDMNGKKTTRNITNIVDRAKYENYGVGTDQSDREWFIKPLQTGKLHVTDFYISKMTGALCFTVSEPITDDNDDMVGIFGVDIRVEDLVKEPEYIAEATQIALKAEYDAKYKSDHWL.

Positions 59 to 329 (IFITDTTFRD…TNGIDTTVIT (271 aa)) constitute a Pyruvate carboxyltransferase domain. A Cache domain is found at 497-601 (VMQRFIEEYP…GVDIRVEDLV (105 aa)).

The protein belongs to the alpha-IPM synthase/homocitrate synthase family. Homotetramer. Requires Co(2+) as cofactor. It depends on Mn(2+) as a cofactor.

It catalyses the reaction oxaloacetate + acetyl-CoA + H2O = citrate + CoA + H(+). With respect to regulation, inhibited by p-hydroxymercuribenzoate and EDTA. Functionally, catalyzes the condensation of the acetyl group of acetyl-CoA with oxaloacetate to form citrate. In Syntrophus aciditrophicus (strain SB), this protein is Citrate (Re)-synthase.